Consider the following 362-residue polypeptide: Chorismate synthase (362 aa).

Arg-46 is a binding site for NADP(+). Residues 122–124 (RSS), 238–239 (NA), Gly-278, 293–297 (KPTPS), and Arg-319 each bind FMN.

The protein belongs to the chorismate synthase family. In terms of assembly, homotetramer. The cofactor is FMNH2.

The enzyme catalyses 5-O-(1-carboxyvinyl)-3-phosphoshikimate = chorismate + phosphate. It participates in metabolic intermediate biosynthesis; chorismate biosynthesis; chorismate from D-erythrose 4-phosphate and phosphoenolpyruvate: step 7/7. Functionally, catalyzes the anti-1,4-elimination of the C-3 phosphate and the C-6 proR hydrogen from 5-enolpyruvylshikimate-3-phosphate (EPSP) to yield chorismate, which is the branch point compound that serves as the starting substrate for the three terminal pathways of aromatic amino acid biosynthesis. This reaction introduces a second double bond into the aromatic ring system. This chain is Chorismate synthase, found in Campylobacter jejuni subsp. doylei (strain ATCC BAA-1458 / RM4099 / 269.97).